A 411-amino-acid polypeptide reads, in one-letter code: Serine--tRNA ligase (411 aa).

226–228 is an L-serine binding site; the sequence is TSE. An ATP-binding site is contributed by 257–259; the sequence is RKE. Residue Glu280 participates in L-serine binding. 344–347 provides a ligand contact to ATP; that stretch reads EISS. Residue Ser379 participates in L-serine binding.

Belongs to the class-II aminoacyl-tRNA synthetase family. Type-1 seryl-tRNA synthetase subfamily. As to quaternary structure, homodimer. The tRNA molecule binds across the dimer.

The protein resides in the cytoplasm. The enzyme catalyses tRNA(Ser) + L-serine + ATP = L-seryl-tRNA(Ser) + AMP + diphosphate + H(+). The catalysed reaction is tRNA(Sec) + L-serine + ATP = L-seryl-tRNA(Sec) + AMP + diphosphate + H(+). Its pathway is aminoacyl-tRNA biosynthesis; selenocysteinyl-tRNA(Sec) biosynthesis; L-seryl-tRNA(Sec) from L-serine and tRNA(Sec): step 1/1. Catalyzes the attachment of serine to tRNA(Ser). Is also able to aminoacylate tRNA(Sec) with serine, to form the misacylated tRNA L-seryl-tRNA(Sec), which will be further converted into selenocysteinyl-tRNA(Sec). The protein is Serine--tRNA ligase of Campylobacter jejuni subsp. jejuni serotype O:2 (strain ATCC 700819 / NCTC 11168).